Reading from the N-terminus, the 230-residue chain is Probable tetraspanin tspD (230 aa).

The Cytoplasmic segment spans residues 1-20 (MVEYLPSTPRYLKVPLIILN). A helical transmembrane segment spans residues 21–41 (VILWLLGLVLVIIGGICVGFF). The Extracellular portion of the chain corresponds to 42-65 (SRFKELQEVGGVSESIKSISVSLP). Residues 66–86 (AGVLSIGIFFMVLTVAGCIVA) traverse the membrane as a helical segment. Residues 87 to 90 (YKEK) are Cytoplasmic-facing. The helical transmembrane segment at 91–111 (MVGLVFYTILMLVLLVVLIGI) threads the bilayer. The Extracellular segment spans residues 112–200 (GGEALTYHNA…VNSKLYLVGS (89 aa)). Residues N133, N138, N163, and N179 are each glycosylated (N-linked (GlcNAc...) asparagine). The helical transmembrane segment at 201–221 (AGVAIGVIELVSLMFALFLIV) threads the bilayer. At 222 to 230 (RLYKSNSYR) the chain is on the cytoplasmic side.

Belongs to the tetraspanin (TM4SF) family.

It localises to the membrane. The polypeptide is Probable tetraspanin tspD (tspD) (Dictyostelium discoideum (Social amoeba)).